The sequence spans 386 residues: Galactokinase (386 aa).

35-38 (EHTD) contacts substrate. Residues Ser69 and 125–131 (GAGLSSS) contribute to the ATP site. Residues Ser131 and Glu163 each contribute to the Mg(2+) site. Asp175 acts as the Proton acceptor in catalysis. Residue Tyr224 participates in substrate binding.

Belongs to the GHMP kinase family. GalK subfamily.

It localises to the cytoplasm. It catalyses the reaction alpha-D-galactose + ATP = alpha-D-galactose 1-phosphate + ADP + H(+). The protein operates within carbohydrate metabolism; galactose metabolism. Catalyzes the transfer of the gamma-phosphate of ATP to D-galactose to form alpha-D-galactose-1-phosphate (Gal-1-P). This chain is Galactokinase, found in Vibrio parahaemolyticus serotype O3:K6 (strain RIMD 2210633).